The chain runs to 161 residues: Crossover junction endodeoxyribonuclease RuvC (161 aa).

Residues Asp9, Glu69, and His144 contribute to the active site. Mg(2+)-binding residues include Asp9, Glu69, and His144.

Belongs to the RuvC family. As to quaternary structure, homodimer which binds Holliday junction (HJ) DNA. The HJ becomes 2-fold symmetrical on binding to RuvC with unstacked arms; it has a different conformation from HJ DNA in complex with RuvA. In the full resolvosome a probable DNA-RuvA(4)-RuvB(12)-RuvC(2) complex forms which resolves the HJ. Mg(2+) is required as a cofactor.

The protein resides in the cytoplasm. The enzyme catalyses Endonucleolytic cleavage at a junction such as a reciprocal single-stranded crossover between two homologous DNA duplexes (Holliday junction).. The RuvA-RuvB-RuvC complex processes Holliday junction (HJ) DNA during genetic recombination and DNA repair. Endonuclease that resolves HJ intermediates. Cleaves cruciform DNA by making single-stranded nicks across the HJ at symmetrical positions within the homologous arms, yielding a 5'-phosphate and a 3'-hydroxyl group; requires a central core of homology in the junction. The consensus cleavage sequence is 5'-(A/T)TT(C/G)-3'. Cleavage occurs on the 3'-side of the TT dinucleotide at the point of strand exchange. HJ branch migration catalyzed by RuvA-RuvB allows RuvC to scan DNA until it finds its consensus sequence, where it cleaves and resolves the cruciform DNA. This Borrelia turicatae (strain 91E135) protein is Crossover junction endodeoxyribonuclease RuvC.